The sequence spans 150 residues: Ribonuclease H (150 aa).

In terms of domain architecture, RNase H type-1 spans 7–148 (ESNIVEIWTD…ADQLATKARM (142 aa)). Asp16, Glu54, Asp76, and Asp140 together coordinate Mg(2+).

This sequence belongs to the RNase H family. In terms of assembly, monomer. Requires Mg(2+) as cofactor.

The protein localises to the cytoplasm. The enzyme catalyses Endonucleolytic cleavage to 5'-phosphomonoester.. Its function is as follows. Endonuclease that specifically degrades the RNA of RNA-DNA hybrids. This is Ribonuclease H from Granulibacter bethesdensis (strain ATCC BAA-1260 / CGDNIH1).